A 1388-amino-acid chain; its full sequence is MSRPPPTGKMPGAPEAAAGDGAGAGRQRKLEALIRDPRSPINVESLLDGLNSLVLDLDFPALRKNKNIDNFLNRYEKIVKKIRGLQMKAEDYDVVKVIGRGAFGEVQLVRHKASQKVYAMKLLSKFEMIKRSDSAFFWEERDIMAFANSPWVVQLFCAFQDDRYLYMVMEYMPGGDLVNLMSNYDVPEKWAKFYTAEVVLALDAIHSMGLIHRDVKPDNMLLDKHGHLKLADFGTCMKMDETGMVHCDTAVGTPDYISPEVLKSQGGDGYYGRECDWWSVGVFLFEMLVGDTPFYADSLVGTYSKIMDHKNSLCFPEDTEISKHAKNLICAFLTDREVRLGRNGVEEIKSASFFKNDQWNWDNIRETAAPVVPELSSDIDSSNFDDIEDDKGDVETFPIPKAFVGNQLPFIGFTYFRENLLLSDSPPCRENDAIQTRKSEESQEIQKKLYALEEHLSSEVQAKEELEQKCKSINTRLEKTAKELEEEITFRKNVESTLRQLEREKALLQHKNAEYQRKADHEADKKRNLENDVNSLKDQLEDLKKRNQSSQISTEKVNQLQKQLDEANALLRTESDTAARLRKTQAESSKQIQQLESNNRDLQDKNCLLETAKLKLEKEFINLQSALESERRDRTHGSEIINDLQGRISGLEEDLKTGKTLLAKVELEKRQLQEKLTDLEKEKSNMEIDMTYQLKVIQQSLEQEEAEHKTTKARLADKNKIYESIEEAKSEAMKEMEKKLLEERSLKQKVENLLLEAEKRCSILDCDLKQSQQKLNELLKQKDVLNEDVRNLTLKIEQETQKRCLMQNDLKMQTQQVNTLKMSEKQIKQENNHLMEMKMNLEKQNAELRKERQDADGQMKELQDQLEAEQYFSTLYKTQVRELKEENEEKTKLCKELQQKKQDLQDERDSLAAQLEITLTKADSEQLARSIAEEQYSDLEKEKIMKELEIKEMMARHKQELTEKDATIASLEETNRTLTSDVANLANEKEELNNKLKDTQEQLSKLKDEEISAAAIKAQFEKQLLTERTLKTQAVNKLAEIMNRKEPVKRGSDTDVRRKEKENRKLHMELKSEREKLTQQMIKYQKELNEMQAQIAEESQIRIELQMTLDSKDSDIEQLRSQLQALHIGMDSSSIGSGPGDAEPDDGFPESRLEGWLSLPVRNNTKKFGWVKKYVIVSSKKILFYDSEQDKEQSNPYMVLDIDKLFHVRPVTQTDVYRADAKEIPRIFQILYANEGESKKEPEFPVEPVGEKSNYICHKGHEFIPTLYHFPTNCEACMKPLWHMFKPPPALECSRCHIKCHKDHMDKKEEIIAPCKVYYDISSAKNLLLLANSTEEQQKWVSRLVKKIPKKPPAPDPFARSSPRTSMKIQQNQSIRRPSRQLAPNKPS.

The tract at residues 1 to 24 is disordered; the sequence is MSRPPPTGKMPGAPEAAAGDGAGA. The region spanning 92 to 354 is the Protein kinase domain; sequence YDVVKVIGRG…VEEIKSASFF (263 aa). Residues 98 to 106 and Lys-121 each bind ATP; that span reads IGRGAFGEV. Asp-214 (proton acceptor) is an active-site residue. Positions 357 to 425 constitute an AGC-kinase C-terminal domain; sequence DQWNWDNIRE…FRENLLLSDS (69 aa). The interval 363-784 is interaction with PPP1R12A; it reads NIRETAAPVV…LNELLKQKDV (422 aa). An interaction with NPM1 region spans residues 373 to 420; the sequence is PELSSDIDSSNFDDIEDDKGDVETFPIPKAFVGNQLPFIGFTYFRENL. Position 414 is a phosphothreonine; by ROCK2 (Thr-414). Coiled-coil stretches lie at residues 439–1024 and 1052–1131; these read SEES…EKQL and SDTD…IGMD. Residues 497–573 enclose the REM-1 domain; sequence TLRQLEREKA…LDEANALLRT (77 aa). Positions 513–530 are enriched in basic and acidic residues; that stretch reads AEYQRKADHEADKKRNLE. The disordered stretch occupies residues 513–532; it reads AEYQRKADHEADKKRNLEND. Tyr-722 carries the post-translational modification Phosphotyrosine; by SRC. The RhoBD domain occupies 979 to 1047; sequence TSDVANLANE…LAEIMNRKEP (69 aa). Positions 979-1047 are RHOA binding; the sequence is TSDVANLANE…LAEIMNRKEP (69 aa). Ser-1137 carries the phosphoserine modification. The 200-residue stretch at 1150-1349 folds into the PH domain; it reads ESRLEGWLSL…WVSRLVKKIP (200 aa). Thr-1212 carries the post-translational modification Phosphothreonine. A Phorbol-ester/DAG-type zinc finger spans residues 1260-1315; the sequence is GHEFIPTLYHFPTNCEACMKPLWHMFKPPPALECSRCHIKCHKDHMDKKEEIIAPC. The tract at residues 1345–1388 is disordered; that stretch reads VKKIPKKPPAPDPFARSSPRTSMKIQQNQSIRRPSRQLAPNKPS. Phosphoserine is present on residues Ser-1362 and Ser-1374. The span at 1362-1376 shows a compositional bias: polar residues; that stretch reads SPRTSMKIQQNQSIR.

This sequence belongs to the protein kinase superfamily. AGC Ser/Thr protein kinase family. In terms of assembly, homodimer. Interacts with IRS1. Interacts with RAF1. Interacts with RHOA (activated by GTP), RHOB, RHOC. Interacts with PPP1R12A. Interacts with EP300. Interacts with CHORDC1. Interacts with BRCA2. Interacts with NPM1; this interaction enhances its activity. Interacts with SORL1. Interacts with PJVK. Mg(2+) serves as cofactor. In terms of processing, autophosphorylated. Phosphorylation at Tyr-722 reduces its binding to RHOA and is crucial for focal adhesion dynamics. Dephosphorylation by PTPN11 stimulates its RHOA binding activity. Post-translationally, cleaved by granzyme B during apoptosis. This leads to constitutive activation of the kinase and membrane blebbing. As to expression, highly expressed in brain, lung, liver, skeletal muscle, kidney and testis.

The protein localises to the cytoplasm. The protein resides in the cell membrane. It localises to the nucleus. Its subcellular location is the cytoskeleton. It is found in the microtubule organizing center. The protein localises to the centrosome. The catalysed reaction is L-seryl-[protein] + ATP = O-phospho-L-seryl-[protein] + ADP + H(+). It carries out the reaction L-threonyl-[protein] + ATP = O-phospho-L-threonyl-[protein] + ADP + H(+). Its activity is regulated as follows. Activated by RHOA binding. Inhibited by Y-27632. In terms of biological role, protein kinase which is a key regulator of actin cytoskeleton and cell polarity. Involved in regulation of smooth muscle contraction, actin cytoskeleton organization, stress fiber and focal adhesion formation, neurite retraction, cell adhesion and motility via phosphorylation of ADD1, BRCA2, CNN1, EZR, DPYSL2, EP300, MSN, MYL9/MLC2, NPM1, RDX, PPP1R12A and VIM. Phosphorylates SORL1 and IRF4. Acts as a negative regulator of VEGF-induced angiogenic endothelial cell activation. Positively regulates the activation of p42/MAPK1-p44/MAPK3 and of p90RSK/RPS6KA1 during myogenic differentiation. Plays an important role in the timely initiation of centrosome duplication. Inhibits keratinocyte terminal differentiation. May regulate closure of the eyelids and ventral body wall through organization of actomyosin bundles. Plays a critical role in the regulation of spine and synaptic properties in the hippocampus. Plays a role in placental homeostasis during the perinatal period. Plays an important role in generating the circadian rhythm of the aortic myofilament Ca(2+) sensitivity and vascular contractility by modulating the myosin light chain phosphorylation. This chain is Rho-associated protein kinase 2 (Rock2), found in Rattus norvegicus (Rat).